A 799-amino-acid polypeptide reads, in one-letter code: ATP synthase subunit alpha (799 aa).

Residues Met1–Glu549 form an ATP synthase alpha chain region. Gly170–Thr177 lines the ATP pocket. The interval Thr550–Lys799 is unknown.

Belongs to the ATPase alpha/beta chains family. As to quaternary structure, F-type ATPases have 2 components, CF(1) - the catalytic core - and CF(0) - the membrane proton channel. CF(1) has five subunits: alpha(3), beta(3), gamma(1), delta(1), epsilon(1). CF(0) has three main subunits: a(1), b(2) and c(9-12). The alpha and beta chains form an alternating ring which encloses part of the gamma chain. CF(1) is attached to CF(0) by a central stalk formed by the gamma and epsilon chains, while a peripheral stalk is formed by the delta and b chains.

The protein localises to the cell membrane. The enzyme catalyses ATP + H2O + 4 H(+)(in) = ADP + phosphate + 5 H(+)(out). Its function is as follows. Produces ATP from ADP in the presence of a proton gradient across the membrane. The alpha chain is a regulatory subunit. The protein is ATP synthase subunit alpha (atpA) of Ureaplasma parvum serovar 3 (strain ATCC 27815 / 27 / NCTC 11736).